The primary structure comprises 359 residues: MAEFVRAQIFGTTFEITSRYTDLQPVGMGAFGLVCSAKDQLTSQAVAVKKIMKPFSTPVLSKRTYRELKLLKHLRHENIICLSDIFISPLEDMYVVTELLGTDLHRLLTSRPLEKQFIQYFLYQILRGLKYVHSAGVVHRDLKPSNILINENCDLKICDFGLARIQDPQMTGYVSTRYYRAPEIMLTWQKYDVEVDIWSAGCIFAEMLEGKPLFPGKDHVNQFSIITELLGTPPDDVIATICSENTLRFVQSLPKRERQPLKNKFKNADPQAIELLERMLVFDPRKRVKAGEALADPYLAPYHDPTDEPEAQEKFDWSFNDADLPVDTWKIMMYSEILDFHNVDANAEQAAHNNDTVAG.

Residues tyrosine 20 to leucine 299 form the Protein kinase domain. Residues valine 26 to valine 34 and lysine 49 each bind ATP. Aspartate 141 acts as the Proton acceptor in catalysis. Threonine 171 is modified (phosphothreonine). Residues threonine 171–tyrosine 173 carry the TXY motif. Tyrosine 173 is modified (phosphotyrosine).

Belongs to the protein kinase superfamily. Ser/Thr protein kinase family. MAP kinase subfamily. HOG1 sub-subfamily. It depends on Mg(2+) as a cofactor. Dually phosphorylated on Thr-171 and Tyr-173, which activates the enzyme.

It localises to the cytoplasm. The protein localises to the nucleus. It carries out the reaction L-seryl-[protein] + ATP = O-phospho-L-seryl-[protein] + ADP + H(+). The catalysed reaction is L-threonyl-[protein] + ATP = O-phospho-L-threonyl-[protein] + ADP + H(+). Activated by tyrosine and threonine phosphorylation. In terms of biological role, proline-directed serine/threonine-protein kinase involved in a signal transduction pathway that is activated by changes in the osmolarity of the extracellular environment. Controls osmotic regulation of transcription of target genes. This chain is Mitogen-activated protein kinase HOG1 (HOG1), found in Hortaea werneckii.